A 445-amino-acid chain; its full sequence is Trigger factor (445 aa).

In terms of domain architecture, PPIase FKBP-type spans 168-253 (GDAVIVDFVG…IHEVRAPQTP (86 aa)).

It belongs to the FKBP-type PPIase family. Tig subfamily.

It is found in the cytoplasm. The catalysed reaction is [protein]-peptidylproline (omega=180) = [protein]-peptidylproline (omega=0). In terms of biological role, involved in protein export. Acts as a chaperone by maintaining the newly synthesized protein in an open conformation. Functions as a peptidyl-prolyl cis-trans isomerase. In Hyphomonas neptunium (strain ATCC 15444), this protein is Trigger factor.